Here is a 960-residue protein sequence, read N- to C-terminus: Valine--tRNA ligase (960 aa).

Residues 42-52 carry the 'HIGH' region motif; it reads PNITGNLHMGH. The 'KMSKS' region signature appears at 553–557; that stretch reads KMSKS. Lys556 lines the ATP pocket. The stretch at 879 to 950 forms a coiled coil; the sequence is VLKAIDKEIE…LSQQLESLHD (72 aa).

It belongs to the class-I aminoacyl-tRNA synthetase family. ValS type 1 subfamily. In terms of assembly, monomer.

It is found in the cytoplasm. The catalysed reaction is tRNA(Val) + L-valine + ATP = L-valyl-tRNA(Val) + AMP + diphosphate. In terms of biological role, catalyzes the attachment of valine to tRNA(Val). As ValRS can inadvertently accommodate and process structurally similar amino acids such as threonine, to avoid such errors, it has a 'posttransfer' editing activity that hydrolyzes mischarged Thr-tRNA(Val) in a tRNA-dependent manner. This chain is Valine--tRNA ligase, found in Buchnera aphidicola subsp. Schizaphis graminum (strain Sg).